Consider the following 390-residue polypeptide: MSKSTIEPKNKKSVNRGKEIAKDTILTPNFYTTDFEAMEKMDLSINEDELEAICEEFRKDYNRHHFVRNKEFEGAADKLDPETRELFVDFLEGSCTSEFSGFLLYKELSKRIKDKNPLLAECFAHMARDEARHAGFLNKSMNDFGLQLDLGFLTANKDYTYFPPRSIFYATYISEKIGYWRYIAIFRHLEKNPEGKIFPLFNFFENWCQDENRHGDFFDALMKAQPRSVKSLSNKITIGGSTFTHPLFDYFHRFRYFLNNHPFVSKLWSRFFLLAVFATMYIRDQGTKKDFYSALGLDAREYDQFVINKTNETSARVFPVVLNVFDDSFYRRLDSIVENGKRLSEIDKKDNQNLNKVLSKIPIFISNGYQLLRLYLLKPLDSKDYQPSIR.

It belongs to the AcsF family. Fe cation serves as cofactor.

The catalysed reaction is Mg-protoporphyrin IX 13-monomethyl ester + 3 NADPH + 3 O2 + 2 H(+) = 3,8-divinyl protochlorophyllide a + 3 NADP(+) + 5 H2O. It participates in porphyrin-containing compound metabolism; chlorophyll biosynthesis (light-independent). Catalyzes the formation of the isocyclic ring in chlorophyll biosynthesis. Mediates the cyclase reaction, which results in the formation of divinylprotochlorophyllide (Pchlide) characteristic of all chlorophylls from magnesium-protoporphyrin IX 13-monomethyl ester (MgPMME). This chain is Magnesium-protoporphyrin IX monomethyl ester [oxidative] cyclase, found in Prochlorococcus marinus (strain MIT 9215).